A 173-amino-acid polypeptide reads, in one-letter code: Large ribosomal subunit protein uL10 (173 aa).

The protein belongs to the universal ribosomal protein uL10 family. As to quaternary structure, part of the ribosomal stalk of the 50S ribosomal subunit. The N-terminus interacts with L11 and the large rRNA to form the base of the stalk. The C-terminus forms an elongated spine to which L12 dimers bind in a sequential fashion forming a multimeric L10(L12)X complex.

Forms part of the ribosomal stalk, playing a central role in the interaction of the ribosome with GTP-bound translation factors. This Beutenbergia cavernae (strain ATCC BAA-8 / DSM 12333 / CCUG 43141 / JCM 11478 / NBRC 16432 / NCIMB 13614 / HKI 0122) protein is Large ribosomal subunit protein uL10.